The sequence spans 220 residues: tRNA (guanine-N(7)-)-methyltransferase (220 aa).

4 residues coordinate S-adenosyl-L-methionine: Glu46, Asp71, Asp100, and Asp122. Asp122 is a catalytic residue. Substrate is bound by residues Lys126, Asp158, and 196–199; that span reads TEYE.

Belongs to the class I-like SAM-binding methyltransferase superfamily. TrmB family.

It catalyses the reaction guanosine(46) in tRNA + S-adenosyl-L-methionine = N(7)-methylguanosine(46) in tRNA + S-adenosyl-L-homocysteine. It functions in the pathway tRNA modification; N(7)-methylguanine-tRNA biosynthesis. Functionally, catalyzes the formation of N(7)-methylguanine at position 46 (m7G46) in tRNA. This Malacoplasma penetrans (strain HF-2) (Mycoplasma penetrans) protein is tRNA (guanine-N(7)-)-methyltransferase.